Here is a 254-residue protein sequence, read N- to C-terminus: MLQTEMKVIQQTEIADKVYELILTGECVADMSPGQFLMLKPSRSDLLMRRPISICSYDKTAKTCILLYRVEGDGTRDFSKLSEGDTIDVLGPLGKGFDIDQTPAPKTALLIGGGIGVPPMYQLGKELAGKGVQVTFVNGFQSAKDSFYEKEMTAYGTVHIATVDGSLGTQGFVTDVTKNFPEEPDVIYSCGPKAMLQAVKASFPETKTYLSLEERMACGIGACYACVCPKADDTKKQFKVCEDGPVFRADEVSL.

Residues 1–99 (MLQTEMKVIQ…LGPLGKGFDI (99 aa)) form the FAD-binding FR-type domain. Residues 50–53 (RPIS), 67–69 (LYR), and 74–75 (GT) each bind FAD. 4 residues coordinate [2Fe-2S] cluster: C218, C223, C226, and C241.

The protein belongs to the PyrK family. As to quaternary structure, heterotetramer of 2 PyrK and 2 PyrD type B subunits. Requires [2Fe-2S] cluster as cofactor. It depends on FAD as a cofactor.

It functions in the pathway pyrimidine metabolism; UMP biosynthesis via de novo pathway; orotate from (S)-dihydroorotate (NAD(+) route): step 1/1. Its function is as follows. Responsible for channeling the electrons from the oxidation of dihydroorotate from the FMN redox center in the PyrD type B subunit to the ultimate electron acceptor NAD(+). This chain is Dihydroorotate dehydrogenase B (NAD(+)), electron transfer subunit, found in Listeria monocytogenes serotype 4a (strain HCC23).